The primary structure comprises 476 residues: Siroheme synthase (476 aa).

The segment at M1 to L204 is precorrin-2 dehydrogenase /sirohydrochlorin ferrochelatase. NAD(+)-binding positions include S22–V23 and P43–T44. A Phosphoserine modification is found at S129. Residues G218–P476 form a uroporphyrinogen-III C-methyltransferase region. P227 provides a ligand contact to S-adenosyl-L-methionine. D250 functions as the Proton acceptor in the catalytic mechanism. The active-site Proton donor is K272. S-adenosyl-L-methionine contacts are provided by residues G303 to D305, I308, T333 to A334, M385, and G414.

It in the N-terminal section; belongs to the precorrin-2 dehydrogenase / sirohydrochlorin ferrochelatase family. This sequence in the C-terminal section; belongs to the precorrin methyltransferase family.

It catalyses the reaction uroporphyrinogen III + 2 S-adenosyl-L-methionine = precorrin-2 + 2 S-adenosyl-L-homocysteine + H(+). The catalysed reaction is precorrin-2 + NAD(+) = sirohydrochlorin + NADH + 2 H(+). It carries out the reaction siroheme + 2 H(+) = sirohydrochlorin + Fe(2+). It participates in cofactor biosynthesis; adenosylcobalamin biosynthesis; precorrin-2 from uroporphyrinogen III: step 1/1. Its pathway is cofactor biosynthesis; adenosylcobalamin biosynthesis; sirohydrochlorin from precorrin-2: step 1/1. The protein operates within porphyrin-containing compound metabolism; siroheme biosynthesis; precorrin-2 from uroporphyrinogen III: step 1/1. It functions in the pathway porphyrin-containing compound metabolism; siroheme biosynthesis; siroheme from sirohydrochlorin: step 1/1. It participates in porphyrin-containing compound metabolism; siroheme biosynthesis; sirohydrochlorin from precorrin-2: step 1/1. Its function is as follows. Multifunctional enzyme that catalyzes the SAM-dependent methylations of uroporphyrinogen III at position C-2 and C-7 to form precorrin-2 via precorrin-1. Then it catalyzes the NAD-dependent ring dehydrogenation of precorrin-2 to yield sirohydrochlorin. Finally, it catalyzes the ferrochelation of sirohydrochlorin to yield siroheme. This is Siroheme synthase from Nitrosomonas eutropha (strain DSM 101675 / C91 / Nm57).